The chain runs to 157 residues: Peptide methionine sulfoxide reductase MsrB (157 aa).

A MsrB domain is found at 14–137 (DNDLRERLTP…NSAALRFVPL (124 aa)). Catalysis depends on Cys126, which acts as the Nucleophile.

It belongs to the MsrB Met sulfoxide reductase family.

The enzyme catalyses L-methionyl-[protein] + [thioredoxin]-disulfide + H2O = L-methionyl-(R)-S-oxide-[protein] + [thioredoxin]-dithiol. This Deinococcus radiodurans (strain ATCC 13939 / DSM 20539 / JCM 16871 / CCUG 27074 / LMG 4051 / NBRC 15346 / NCIMB 9279 / VKM B-1422 / R1) protein is Peptide methionine sulfoxide reductase MsrB.